We begin with the raw amino-acid sequence, 121 residues long: Iron-sulfur cluster assembly protein CyaY (121 aa).

This sequence belongs to the frataxin family.

In terms of biological role, involved in iron-sulfur (Fe-S) cluster assembly. May act as a regulator of Fe-S biogenesis. This chain is Iron-sulfur cluster assembly protein CyaY, found in Buchnera aphidicola subsp. Schizaphis graminum (strain Sg).